The primary structure comprises 94 residues: CRISPR-associated endoribonuclease Cas2 (94 aa).

It belongs to the CRISPR-associated endoribonuclease Cas2 protein family. E.coli-subtype subfamily. As to quaternary structure, homodimer. Part of the Cas1-Cas2 complex. Forms a hexamer with 2 Cas1 dimers sandwiching a Cas2 dimer. The DNA lies across a flat surface extending from 1 Cas1 dimer, across the Cas2 dimer and contacting the other Cas1 dimer. Only 1 Cas1 protein from each dimer is catalytic, the other interacts with the Cas2 dimer and possibly target DNA.

Its function is as follows. CRISPR (clustered regularly interspaced short palindromic repeat), is an adaptive immune system that provides protection against mobile genetic elements (viruses, transposable elements and conjugative plasmids). CRISPR clusters contain sequences complementary to antecedent mobile elements and target invading nucleic acids. CRISPR clusters are transcribed and processed into CRISPR RNA (crRNA). The Cas1-Cas2 complex is involved in CRISPR adaptation, the first stage of CRISPR immunity, being required for the addition/removal of CRISPR spacers at the leader end of the CRISPR locus. The Cas1-Cas2 complex introduces staggered nicks into both strands of the CRISPR array near the leader repeat and joins the 5'-ends of the repeat strands with the 3'-ends of the new spacer sequence. Spacer DNA integration requires supercoiled target DNA and 3'-OH ends on the inserted (spacer) DNA and probably initiates with a nucleophilic attack of the C 3'-OH end of the protospacer on the minus strand of the first repeat sequence. Expression of Cas1-Cas2 in a strain lacking both genes permits spacer acquisition. Cas2 not seen to bind DNA alone; the Cas1-Cas2 complex preferentially binds CRISPR-locus DNA. Highest binding is seen to a dual forked DNA complex with 3'-overhangs and a protospacer-adjacent motif-complement specifically positioned. The protospacer DNA lies across a flat surface extending from 1 Cas1 dimer, across the Cas2 dimer and contacting the other Cas1 dimer; the 23 bp-long ds section of the DNA is bracketed by 1 Tyr-22 from each of the Cas1 dimers. Cas1 cuts within the 3'-overhang, to generate a 33-nucleotide DNA that is probably incorporated into the CRISPR leader by a cut-and-paste mechanism. This subunit's probable nuclease activity is not required for spacer acquisition. The protein is CRISPR-associated endoribonuclease Cas2 (ygbF) of Escherichia coli (strain K12).